The primary structure comprises 163 residues: Peptide deformylase (163 aa).

Fe cation is bound by residues C91 and H133. E134 is a catalytic residue. A Fe cation-binding site is contributed by H137.

This sequence belongs to the polypeptide deformylase family. It depends on Fe(2+) as a cofactor.

It catalyses the reaction N-terminal N-formyl-L-methionyl-[peptide] + H2O = N-terminal L-methionyl-[peptide] + formate. Removes the formyl group from the N-terminal Met of newly synthesized proteins. Requires at least a dipeptide for an efficient rate of reaction. N-terminal L-methionine is a prerequisite for activity but the enzyme has broad specificity at other positions. In Lachnoclostridium phytofermentans (strain ATCC 700394 / DSM 18823 / ISDg) (Clostridium phytofermentans), this protein is Peptide deformylase.